An 800-amino-acid polypeptide reads, in one-letter code: Metabotropic glutamate receptor-like protein C (800 aa).

The N-terminal stretch at 1–21 (MKMKIIFLILILIFSINIIKC) is a signal peptide. Over 22 to 392 (DKEFKMLTLL…EVEFSQSLQY (371 aa)) the chain is Extracellular. N-linked (GlcNAc...) asparagine glycosylation is found at Asn69, Asn107, Asn166, Asn258, Asn276, Asn302, and Asn345. A helical transmembrane segment spans residues 393–413 (GFSITTGVLIAITIIMMLGIV). Residues 414-426 (RYKSTPSIRSASP) lie on the Cytoplasmic side of the membrane. A helical membrane pass occupies residues 427-447 (IFLNFILAGGIIVYIGIIVWV). The Extracellular portion of the chain corresponds to 448 to 463 (GPANDHQCNARLWLVT). Residues 464–484 (LGFSTLIGSLVVKNFRIWLIF) form a helical membrane-spanning segment. The Cytoplasmic segment spans residues 485-499 (DNPELKSISITNYQL). The chain crosses the membrane as a helical span at residues 500–520 (FPWVGACLVINIILMSILTSV). At 521–551 (GDLREIDAQGIDSLGKYEFMKVCKMNSSGAS) the chain is on the extracellular side. Asn546 carries N-linked (GlcNAc...) asparagine glycosylation. The chain crosses the membrane as a helical span at residues 552 to 572 (TLYTILAYFAALLLVGVFVSW). At 573 to 586 (KIRIVDIQEFNESK) the chain is on the cytoplasmic side. A helical transmembrane segment spans residues 587-607 (AIANTLYAISFCLFVIVPLMI). Over 608 to 616 (SPQDKQSET) the chain is Extracellular. The chain crosses the membrane as a helical span at residues 617–637 (IVLCTAGLFITTAALLIIFTP). Topologically, residues 638–800 (KFWRVFTLGD…NDTEEEDKNQ (163 aa)) are cytoplasmic. Disordered regions lie at residues 658-694 (QSNV…TETS) and 718-800 (EFDD…DKNQ). The span at 718–732 (EFDDNNIEQDNDNDN) shows a compositional bias: acidic residues. The span at 733–774 (DNNNNNNNNNNNNNNNNNNNNNNNNNNNNNNNNNNNNNNNNN) shows a compositional bias: low complexity. Basic and acidic residues predominate over residues 781–791 (NDEKVEEKQQN).

The protein in the N-terminal section; belongs to the BMP lipoprotein family. It in the C-terminal section; belongs to the G-protein coupled receptor 3 family. GABA-B receptor subfamily.

The protein resides in the membrane. This Dictyostelium discoideum (Social amoeba) protein is Metabotropic glutamate receptor-like protein C (grlC).